Here is a 389-residue protein sequence, read N- to C-terminus: MWIKGKAWFNNSIDTICIQIDRFIKNIKKDCKPDIEFKENQLILPASIDMHVHVRGAQLSYKETVATATSEAAYGGIGLIIDMPNTLPPVNTYERVIERIREFENYSRTDFGIYSGVTKEIEKIDTLPIAGYKIYPEDLDRTETKVLLEKSKKLKVLHPEIPLALKVPRKLRNIWMEIAALHYVQGNVHVTHITNYETVKIAKELGFSTDITPHHLLVNGERDCITKVNPPIRDYLTRLGLWKALFEVDTVVSDHAPHSKEEKNLNYDLCPPGIAAVSFTTPFIYSLVFKDLLNIERAVNLLSKNPAKILNIPYGEIRIGYVANFTIISKNDWKYRTKFSKVTETPLDNFPLEAKVEFTIVQGKIAFDGKNVLPIRGVNAFDKSSRYPV.

Residues H51 and H53 each contribute to the Zn(2+) site. Substrate-binding positions include 53–55 and N85; that span reads HVR. Positions 133, 158, 192, and 254 each coordinate Zn(2+). Position 133 is an N6-carboxylysine (K133). D254 is an active-site residue. Substrate-binding positions include H258 and 272 to 273; that span reads PG.

This sequence belongs to the metallo-dependent hydrolases superfamily. DHOase family. Class I DHOase subfamily. It depends on Zn(2+) as a cofactor.

It catalyses the reaction (S)-dihydroorotate + H2O = N-carbamoyl-L-aspartate + H(+). Its pathway is pyrimidine metabolism; UMP biosynthesis via de novo pathway; (S)-dihydroorotate from bicarbonate: step 3/3. Functionally, catalyzes the reversible cyclization of carbamoyl aspartate to dihydroorotate. The polypeptide is Dihydroorotase (Sulfurisphaera tokodaii (strain DSM 16993 / JCM 10545 / NBRC 100140 / 7) (Sulfolobus tokodaii)).